A 619-amino-acid chain; its full sequence is MPKLRSATSTEGRNMAGARALWRATGVKDNDFGKPIIAIANSFTQFVPGHVHLKDMGSLVAGAIEEAGGIAKEFNTIAVDDGIAMGHGGMLYSLPSRELIADSVEYMVNAHCADALVCISNCDKITPGMLMAALRLNIPVVFVSGGPMEAGKTKLSDKLIKLDLVDAMVAAADSSVSDEDSAKIERSACPTCGSCSGMFTANSMNCLTEALGLSLPGNGSMLATHSDRRELFLEAGRRVMALTKRYYEQDDVSALPRNIASFKAFENAMALDIAMGGSSNTVLHLLAAAQEADVAFTMDDIDRMSRQVPHLCKVAPSTAKYHMEDVHRAGGVMGILGELDRAGLLHTDVPHVAADAGGNLKSVLAKYDVMQTQDDKVKQFFMAGPAGIPTTKAFSQDCRWPSLDDDRREGCIRSREFAFSQEGGLAVLSGNLADNGCIVKTAGVDESNLTFTGSARVYESQDDAVAGILGGEVVAGDVVVIRYEGPKGGPGMQEMLYPTSYLKSRGLGKACALITDGRFSGGTSGLSIGHVSPEAAAGGTIALIENGDRIEIDIPKRSIKLAVSDAELAARRETMLARGPMAWKPLSRQRYVSMALKAYAMLATSADKGAVRDRSKLED.

Aspartate 81 serves as a coordination point for Mg(2+). A [2Fe-2S] cluster-binding site is contributed by cysteine 122. Aspartate 123 and lysine 124 together coordinate Mg(2+). Lysine 124 is modified (N6-carboxylysine). Cysteine 195 serves as a coordination point for [2Fe-2S] cluster. Position 494 (glutamate 494) interacts with Mg(2+). Serine 520 functions as the Proton acceptor in the catalytic mechanism.

It belongs to the IlvD/Edd family. As to quaternary structure, homodimer. Requires [2Fe-2S] cluster as cofactor. It depends on Mg(2+) as a cofactor.

It catalyses the reaction (2R)-2,3-dihydroxy-3-methylbutanoate = 3-methyl-2-oxobutanoate + H2O. It carries out the reaction (2R,3R)-2,3-dihydroxy-3-methylpentanoate = (S)-3-methyl-2-oxopentanoate + H2O. Its pathway is amino-acid biosynthesis; L-isoleucine biosynthesis; L-isoleucine from 2-oxobutanoate: step 3/4. It functions in the pathway amino-acid biosynthesis; L-valine biosynthesis; L-valine from pyruvate: step 3/4. Its function is as follows. Functions in the biosynthesis of branched-chain amino acids. Catalyzes the dehydration of (2R,3R)-2,3-dihydroxy-3-methylpentanoate (2,3-dihydroxy-3-methylvalerate) into 2-oxo-3-methylpentanoate (2-oxo-3-methylvalerate) and of (2R)-2,3-dihydroxy-3-methylbutanoate (2,3-dihydroxyisovalerate) into 2-oxo-3-methylbutanoate (2-oxoisovalerate), the penultimate precursor to L-isoleucine and L-valine, respectively. This is Dihydroxy-acid dehydratase from Shewanella sp. (strain MR-7).